Here is a 226-residue protein sequence, read N- to C-terminus: Protein B (226 aa).

The tract at residues D37–V100 is igG constant region-binding. 3 repeats span residues T158–N168, T169–N179, and V180–N190.

The protein resides in the secreted. Functionally, protein B belongs to the group of bacterial Fc-binding protein. This is Protein B from Streptococcus agalactiae.